The following is a 181-amino-acid chain: Protein TrbB (181 aa).

The signal sequence occupies residues 1–22; it reads MSLTKSLLFTLLLSAAAVQAST. In terms of domain architecture, Thioredoxin spans 37–172; it reads TQPAQPAAGT…FMARVDTVLQ (136 aa).

The protein localises to the periplasm. This Escherichia coli (strain K12) protein is Protein TrbB (trbB).